The primary structure comprises 272 residues: Rhomboid-type serine protease B (272 aa).

6 consecutive transmembrane segments (helical) span residues 30-50, 72-92, 103-123, 133-153, 164-184, and 186-206; these read LVLL…WSVV, PFIH…TPLL, TAVA…YILV, AVVG…IKTF, TKIP…IFVP, and TSFL…LGYL. Residue serine 138 is the Nucleophile of the active site. Histidine 191 is a catalytic residue.

Belongs to the peptidase S54 family.

It is found in the membrane. The enzyme catalyses Cleaves type-1 transmembrane domains using a catalytic dyad composed of serine and histidine that are contributed by different transmembrane domains.. Rhomboid protease that catalyzes intramembrane proteolysis. Required for transcription factor srbA activation by mediating its release from the membrane and thereby regulating its activity under hypoxic conditions. Essential for iron homeostasis and resistance to azoles such as voriconazole. Required for virulence in murine models of invasive pulmonary aspergillosis (IPA). This Aspergillus fumigatus (strain ATCC MYA-4609 / CBS 101355 / FGSC A1100 / Af293) (Neosartorya fumigata) protein is Rhomboid-type serine protease B.